A 538-amino-acid chain; its full sequence is Probable bifunctional riboflavin biosynthesis protein RIBA 1, chloroplastic (538 aa).

Polar residues predominate over residues M1–L16. Positions M1–N29 are disordered. The N-terminal 73 residues, M1–V73, are a transit peptide targeting the chloroplast. The segment at R46 to K311 is DHBP synthase. D-ribulose 5-phosphate contacts are provided by residues R134–E135, D139, R249–T253, and E273. Mg(2+) is bound at residue E135. Residue H252 participates in Mg(2+) binding. A GTP cyclohydrolase II region spans residues R312–Q530. GTP is bound at residue R362–E366. Residues C367, C378, and C380 each contribute to the Zn(2+) site. GTP-binding positions include Q383, E406 to R408, and T428. Residue D440 is the Proton acceptor; for GTP cyclohydrolase activity of the active site. R442 functions as the Nucleophile; for GTP cyclohydrolase activity in the catalytic mechanism. GTP contacts are provided by T463 and K468. Residues H506 to E538 form a disordered region.

The protein in the N-terminal section; belongs to the DHBP synthase family. This sequence in the C-terminal section; belongs to the GTP cyclohydrolase II family. Mg(2+) is required as a cofactor. Requires Mn(2+) as cofactor. Zn(2+) serves as cofactor.

The protein resides in the plastid. It localises to the chloroplast. The catalysed reaction is D-ribulose 5-phosphate = (2S)-2-hydroxy-3-oxobutyl phosphate + formate + H(+). The enzyme catalyses GTP + 4 H2O = 2,5-diamino-6-hydroxy-4-(5-phosphoribosylamino)-pyrimidine + formate + 2 phosphate + 3 H(+). The protein operates within cofactor biosynthesis; riboflavin biosynthesis; 2-hydroxy-3-oxobutyl phosphate from D-ribulose 5-phosphate: step 1/1. It functions in the pathway cofactor biosynthesis; riboflavin biosynthesis; 5-amino-6-(D-ribitylamino)uracil from GTP: step 1/4. Involved in riboflavin biosynthesis. Catalyzes both the conversion of D-ribulose 5-phosphate to formate and 3,4-dihydroxy-2-butanone 4-phosphate and the conversion of GTP to 2,5-diamino-6-ribosylamino-4(3H)-pyrimidinone 5'-phosphate (DARP), formate and pyrophosphate. The sequence is that of Probable bifunctional riboflavin biosynthesis protein RIBA 1, chloroplastic (RIBA1) from Oryza sativa subsp. japonica (Rice).